Consider the following 375-residue polypeptide: Succinyl-diaminopimelate desuccinylase (375 aa).

H66 is a binding site for Zn(2+). D68 is a catalytic residue. Position 99 (D99) interacts with Zn(2+). E133 (proton acceptor) is an active-site residue. Zn(2+) contacts are provided by E134, E162, and H348.

This sequence belongs to the peptidase M20A family. DapE subfamily. In terms of assembly, homodimer. Zn(2+) serves as cofactor. Co(2+) is required as a cofactor.

It carries out the reaction N-succinyl-(2S,6S)-2,6-diaminopimelate + H2O = (2S,6S)-2,6-diaminopimelate + succinate. Its pathway is amino-acid biosynthesis; L-lysine biosynthesis via DAP pathway; LL-2,6-diaminopimelate from (S)-tetrahydrodipicolinate (succinylase route): step 3/3. Its function is as follows. Catalyzes the hydrolysis of N-succinyl-L,L-diaminopimelic acid (SDAP), forming succinate and LL-2,6-diaminopimelate (DAP), an intermediate involved in the bacterial biosynthesis of lysine and meso-diaminopimelic acid, an essential component of bacterial cell walls. This chain is Succinyl-diaminopimelate desuccinylase, found in Herminiimonas arsenicoxydans.